The sequence spans 695 residues: UvrABC system protein B (695 aa).

Positions 25-176 (KSISEGHRFQ…NQRDVLRDLA (152 aa)) constitute a Helicase ATP-binding domain. 38–45 (GATGTGKT) serves as a coordination point for ATP. The short motif at 91–114 (YYDYYQPEAYVPSTDTYIAKSSSI) is the Beta-hairpin element. In terms of domain architecture, Helicase C-terminal spans 454–617 (LLGEIYLRLE…ITPKPIVKKN (164 aa)). Residues 652 to 687 (PELIGQLELKMKEAAKNLEFEEAAQLRDRIKKLRQR) enclose the UVR domain.

This sequence belongs to the UvrB family. As to quaternary structure, forms a heterotetramer with UvrA during the search for lesions. Interacts with UvrC in an incision complex.

The protein localises to the cytoplasm. Functionally, the UvrABC repair system catalyzes the recognition and processing of DNA lesions. A damage recognition complex composed of 2 UvrA and 2 UvrB subunits scans DNA for abnormalities. Upon binding of the UvrA(2)B(2) complex to a putative damaged site, the DNA wraps around one UvrB monomer. DNA wrap is dependent on ATP binding by UvrB and probably causes local melting of the DNA helix, facilitating insertion of UvrB beta-hairpin between the DNA strands. Then UvrB probes one DNA strand for the presence of a lesion. If a lesion is found the UvrA subunits dissociate and the UvrB-DNA preincision complex is formed. This complex is subsequently bound by UvrC and the second UvrB is released. If no lesion is found, the DNA wraps around the other UvrB subunit that will check the other stand for damage. This is UvrABC system protein B from Synechococcus sp. (strain JA-2-3B'a(2-13)) (Cyanobacteria bacterium Yellowstone B-Prime).